The following is a 164-amino-acid chain: UPF0225 protein Shewmr4_2054 (164 aa).

Belongs to the UPF0225 family.

The polypeptide is UPF0225 protein Shewmr4_2054 (Shewanella sp. (strain MR-4)).